The chain runs to 329 residues: GTP 3',8-cyclase (329 aa).

In terms of domain architecture, Radical SAM core spans 8-229 (AFARTFYYLR…AGWQRRLPGR (222 aa)). Arg-17 contributes to the GTP binding site. [4Fe-4S] cluster is bound by residues Cys-24 and Cys-28. Position 30 (Tyr-30) interacts with S-adenosyl-L-methionine. Cys-31 is a binding site for [4Fe-4S] cluster. Arg-68 is a binding site for GTP. Gly-72 contributes to the S-adenosyl-L-methionine binding site. A GTP-binding site is contributed by Thr-99. Ser-123 contributes to the S-adenosyl-L-methionine binding site. GTP is bound at residue Lys-160. Met-194 contributes to the S-adenosyl-L-methionine binding site. Cys-257 and Cys-260 together coordinate [4Fe-4S] cluster. 262 to 264 (RLR) provides a ligand contact to GTP. Cys-274 lines the [4Fe-4S] cluster pocket.

The protein belongs to the radical SAM superfamily. MoaA family. As to quaternary structure, monomer and homodimer. The cofactor is [4Fe-4S] cluster.

The catalysed reaction is GTP + AH2 + S-adenosyl-L-methionine = (8S)-3',8-cyclo-7,8-dihydroguanosine 5'-triphosphate + 5'-deoxyadenosine + L-methionine + A + H(+). It participates in cofactor biosynthesis; molybdopterin biosynthesis. Functionally, catalyzes the cyclization of GTP to (8S)-3',8-cyclo-7,8-dihydroguanosine 5'-triphosphate. This Edwardsiella ictaluri (strain 93-146) protein is GTP 3',8-cyclase.